A 196-amino-acid polypeptide reads, in one-letter code: Pantothenic acid transporter PanT (196 aa).

6 consecutive transmembrane segments (helical) span residues 10 to 30 (AILA…QFVI), 35 to 55 (FPVK…ILGW), 58 to 78 (GAFL…IVTT), 99 to 119 (WGLF…YFVY), 131 to 151 (AAFA…FLFF), and 161 to 181 (YLLG…AVIL).

In terms of assembly, in E.coli forms a stable energy-coupling factor (ECF) transporter complex composed of 2 membrane-embedded substrate-binding protein (S component), 2 ATP-binding proteins (A and A' components) and 2 transmembrane proteins (T component), probably with a stoichiometry of 2:1:1:2. May be able to interact with more than 1 S component at a time.

It localises to the cell membrane. Its function is as follows. Probably a pantothenic acid-binding protein that interacts with the energy-coupling factor (ECF) ABC-transporter complex. Unlike classic ABC transporters this ECF transporter provides the energy necessary to transport a number of different substrates. The substrates themselves are bound by transmembrane, not extracytoplasmic soluble proteins. This chain is Pantothenic acid transporter PanT (panT), found in Lactococcus lactis subsp. cremoris (strain MG1363).